We begin with the raw amino-acid sequence, 309 residues long: Protease HtpX homolog (309 aa).

Helical transmembrane passes span 7 to 27 and 28 to 48; these read FILLAGLTALFVGAGYMIGGP and TGMLVALVLAVGMNLFSYWNA. H134 lines the Zn(2+) pocket. E135 is an active-site residue. H138 contacts Zn(2+). The next 2 helical transmembrane spans lie at 149–169 and 177–197; these read VTATIAGAISALANFAFFFGG and PGGLVGTIALAILAPIAAMLV. E206 serves as a coordination point for Zn(2+). The disordered stretch occupies residues 289–309; the sequence is TRGRSGTAVPTGATGKSGPWG.

It belongs to the peptidase M48B family. It depends on Zn(2+) as a cofactor.

It is found in the cell inner membrane. In Caulobacter sp. (strain K31), this protein is Protease HtpX homolog.